The sequence spans 950 residues: 2-oxoglutarate dehydrogenase E1 component (950 aa).

It belongs to the alpha-ketoglutarate dehydrogenase family. Homodimer. Part of the 2-oxoglutarate dehydrogenase (OGDH) complex composed of E1 (2-oxoglutarate dehydrogenase), E2 (dihydrolipoamide succinyltransferase) and E3 (dihydrolipoamide dehydrogenase); the complex contains multiple copies of the three enzymatic components (E1, E2 and E3). Thiamine diphosphate serves as cofactor.

The catalysed reaction is N(6)-[(R)-lipoyl]-L-lysyl-[protein] + 2-oxoglutarate + H(+) = N(6)-[(R)-S(8)-succinyldihydrolipoyl]-L-lysyl-[protein] + CO2. In terms of biological role, E1 component of the 2-oxoglutarate dehydrogenase (OGDH) complex which catalyzes the decarboxylation of 2-oxoglutarate, the first step in the conversion of 2-oxoglutarate to succinyl-CoA and CO(2). This Cupriavidus necator (strain ATCC 17699 / DSM 428 / KCTC 22496 / NCIMB 10442 / H16 / Stanier 337) (Ralstonia eutropha) protein is 2-oxoglutarate dehydrogenase E1 component (odhA).